The sequence spans 220 residues: Large ribosomal subunit protein bL21c (220 aa).

It belongs to the bacterial ribosomal protein bL21 family. Part of the 50S ribosomal subunit.

The protein localises to the plastid. The protein resides in the chloroplast. Its function is as follows. This protein binds to 23S ribosomal RNA in the presence of protein L20. The sequence is that of Large ribosomal subunit protein bL21c (RPL21) from Arabidopsis thaliana (Mouse-ear cress).